Reading from the N-terminus, the 222-residue chain is Probable transaldolase (222 aa).

Residue K91 is the Schiff-base intermediate with substrate of the active site.

Belongs to the transaldolase family. Type 3B subfamily.

The protein localises to the cytoplasm. The enzyme catalyses D-sedoheptulose 7-phosphate + D-glyceraldehyde 3-phosphate = D-erythrose 4-phosphate + beta-D-fructose 6-phosphate. The protein operates within carbohydrate degradation; pentose phosphate pathway; D-glyceraldehyde 3-phosphate and beta-D-fructose 6-phosphate from D-ribose 5-phosphate and D-xylulose 5-phosphate (non-oxidative stage): step 2/3. Functionally, transaldolase is important for the balance of metabolites in the pentose-phosphate pathway. The chain is Probable transaldolase from Chlorobium phaeovibrioides (strain DSM 265 / 1930) (Prosthecochloris vibrioformis (strain DSM 265)).